We begin with the raw amino-acid sequence, 503 residues long: Transcriptional regulator LovE (503 aa).

The zn(2)-C6 fungal-type DNA-binding region spans 35 to 67 (CDRCHAQKIKCTGNKEVTGRAPCQRCQQAGLRC). Disordered regions lie at residues 89 to 124 (ADPD…RQFL) and 331 to 358 (SHMS…HSSV). The span at 339–357 (SRSQSPSRDDTSSSSGHSS) shows a compositional bias: low complexity.

The protein resides in the nucleus. Its function is as follows. Transcription factor that regulates the expression of the he gene cluster that mediates the biosynthesis of lovastatin (also known as mevinolin, mevacor or monacolin K), a hypolipidemic inhibitor of (3S)-hydroxymethylglutaryl-coenzyme A (HMG-CoA) reductase (HMGR). The chain is Transcriptional regulator LovE from Aspergillus terreus.